The primary structure comprises 278 residues: Transmembrane protein 41A-B (278 aa).

A signal peptide spans 1–23; the sequence is MRSIWGLIVLVAAATFYLYLLSA. 5 helical membrane passes run 78-98, 101-121, 164-184, 191-211, and 230-250; these read GYVFILFCSAYLYKQSFAIPG, FLNMLSGALFGPLHGLIIACT, LFFFLLFLRFFPMTPNWFLNV, IPIPIFFFSILIGLIPYNFIC, and WFTLLQLLLIACVALLPGALI.

It belongs to the TMEM41 family.

It localises to the membrane. The protein is Transmembrane protein 41A-B of Danio rerio (Zebrafish).